The chain runs to 145 residues: I-leader protein (145 aa).

Belongs to the adenoviridae leader protein family.

Its subcellular location is the host cytoplasm. The protein localises to the host perinuclear region. This is I-leader protein from Human adenovirus C serotype 5 (HAdV-5).